The following is a 1263-amino-acid chain: Kinesin-like protein KIN-12E (1263 aa).

Residues 21-44 (PAPSESLRSVPCTPEANTVSRDNH) form a disordered region. Over residues 35–44 (EANTVSRDNH) the composition is skewed to polar residues. Residues 93-430 (NVQVIIRTRP…LKFAQRAKLI (338 aa)) enclose the Kinesin motor domain. Residue 174–181 (GQTGSGKT) participates in ATP binding. 6 coiled-coil regions span residues 679 to 737 (SKKL…KIRS), 764 to 805 (AEAH…AEEN), 831 to 881 (ALEV…KRLL), 905 to 966 (SEKS…HQSE), 1091 to 1168 (TDLL…TIQE), and 1193 to 1251 (LRKE…VLSL).

The protein belongs to the TRAFAC class myosin-kinesin ATPase superfamily. Kinesin family. KIN-12 subfamily.

This chain is Kinesin-like protein KIN-12E, found in Arabidopsis thaliana (Mouse-ear cress).